We begin with the raw amino-acid sequence, 122 residues long: uncharacterized protein (122 aa).

This is an uncharacterized protein from Saccharomyces cerevisiae (strain ATCC 204508 / S288c) (Baker's yeast).